The sequence spans 208 residues: Uracil phosphoribosyltransferase (208 aa).

5-phospho-alpha-D-ribose 1-diphosphate-binding positions include R78, R103, and 130–138; that span reads DPMLATGGS. Uracil is bound by residues I193 and 198-200; that span reads GDA. D199 serves as a coordination point for 5-phospho-alpha-D-ribose 1-diphosphate.

The protein belongs to the UPRTase family. It depends on Mg(2+) as a cofactor.

It carries out the reaction UMP + diphosphate = 5-phospho-alpha-D-ribose 1-diphosphate + uracil. The protein operates within pyrimidine metabolism; UMP biosynthesis via salvage pathway; UMP from uracil: step 1/1. With respect to regulation, allosterically activated by GTP. In terms of biological role, catalyzes the conversion of uracil and 5-phospho-alpha-D-ribose 1-diphosphate (PRPP) to UMP and diphosphate. In Mannheimia succiniciproducens (strain KCTC 0769BP / MBEL55E), this protein is Uracil phosphoribosyltransferase.